The sequence spans 123 residues: Aberrant microtubules protein 1 (123 aa).

Functionally, required for normal microtubule organization. The chain is Aberrant microtubules protein 1 (ABM1) from Saccharomyces cerevisiae (strain ATCC 204508 / S288c) (Baker's yeast).